A 112-amino-acid chain; its full sequence is Lutropin subunit beta (112 aa).

Intrachain disulfides connect cysteine 4-cysteine 52, cysteine 18-cysteine 67, cysteine 21-cysteine 105, cysteine 29-cysteine 83, cysteine 33-cysteine 85, and cysteine 88-cysteine 95. Asparagine 8 carries N-linked (GlcNAc...) asparagine glycosylation.

This sequence belongs to the glycoprotein hormones subunit beta family. Heterodimer of a common alpha chain and a unique beta chain which confers biological specificity to thyrotropin, lutropin, follitropin and gonadotropin.

The protein localises to the secreted. This is Lutropin subunit beta (lhb) from Aquarana catesbeiana (American bullfrog).